The following is a 203-amino-acid chain: ADP-ribosylation factor-like protein 6-interacting protein 1 (203 aa).

Over 1–41 (MAEGDNRSTNLLAAETASLEEQLQGWGEVMLMADKVLRWER) the chain is Cytoplasmic. Residues 42 to 62 (AWFPPAIMGVVSLVFLIIYYL) traverse the membrane as a helical segment. Topologically, residues 63 to 65 (DPS) are lumenal. Residues 66–86 (VLSGVSCFVMFLCLADYLVPI) traverse the membrane as a helical segment. The Cytoplasmic portion of the chain corresponds to 87 to 133 (LAPRIFGSNKWTTEQQQRFHEICSNLVKTRRRAVGWWKRLFTLKEEK). The chain crosses the membrane as a helical span at residues 134–175 (PKMYFMTMIVSLAAVAWVGQQVHNLLLTYLIVTSLLLLPGLN). Over 176–203 (QHGIILKYIGMAKREINKLLKQKEKKNE) the chain is Lumenal.

Belongs to the ARL6ip family. In terms of assembly, homooligomer. Heterodimer with ARL6IP5. Interacts with ARL6. Interacts with TMEM33. Interacts with ATL1. As to expression, expressed in all hematopoietic cell lineages, but the highest level of expression is found in early myeloid progenitor cells. Expressed in brain, bone marrow, thymus and lung. Expressed at low level in liver, kidney and spleen. Not detected in heart.

It is found in the endomembrane system. The protein localises to the endoplasmic reticulum membrane. It localises to the endoplasmic reticulum. Its function is as follows. Positively regulates SLC1A1/EAAC1-mediated glutamate transport by increasing its affinity for glutamate in a PKC activity-dependent manner. Promotes the catalytic efficiency of SLC1A1/EAAC1 probably by reducing its interaction with ARL6IP5, a negative regulator of SLC1A1/EAAC1-mediated glutamate transport. Plays a role in the formation and stabilization of endoplasmic reticulum tubules. Negatively regulates apoptosis, possibly by modulating the activity of caspase-9 (CASP9). Inhibits cleavage of CASP9-dependent substrates and downstream markers of apoptosis but not CASP9 itself. May be involved in protein transport, membrane trafficking, or cell signaling during hematopoietic maturation. In Homo sapiens (Human), this protein is ADP-ribosylation factor-like protein 6-interacting protein 1 (ARL6IP1).